A 4857-amino-acid polypeptide reads, in one-letter code: Dual E2 ubiquitin-conjugating enzyme/E3 ubiquitin-protein ligase BIRC6 (4857 aa).

WD repeat units lie at residues aspartate 68–alanine 106 and leucine 107–cysteine 136. One copy of the BIR repeat lies at proline 268–alanine 377. Zn(2+) is bound by residues cysteine 328, cysteine 331, histidine 348, and cysteine 355. The WD 3 repeat unit spans residues phenylalanine 379–isoleucine 426. Disordered stretches follow at residues aspartate 465 to lysine 498 and alanine 579 to leucine 618. The span at aspartate 472 to serine 482 shows a compositional bias: acidic residues. Residues serine 473, serine 480, serine 482, serine 581, and serine 590 each carry the phosphoserine modification. WD repeat units lie at residues methionine 501–leucine 720, asparagine 730–lysine 850, aspartate 851–glutamate 927, and proline 928–isoleucine 966. Positions alanine 579–histidine 588 are enriched in polar residues. Residues serine 595 to leucine 618 show a composition bias toward polar residues. Disordered stretches follow at residues leucine 984–proline 1004 and glutamine 1053–histidine 1073. Residues serine 992–proline 1004 are compositionally biased toward polar residues. Basic residues predominate over residues arginine 1056–glutamine 1065. The residue at position 1710 (threonine 1710) is a Phosphothreonine. Phosphoserine occurs at positions 2222 and 2955. Residues serine 2945 to valine 2973 form a disordered region. Residues histidine 3189–arginine 3193 are HRRAR loop; important for DIABLO/SMAC and HTRA2 binding. The 250-residue stretch at aspartate 3819–glutamine 4068 folds into the Ubiquitin-like domain. A disordered region spans residues glutamine 3923–serine 3949. A Phosphothreonine modification is found at threonine 3931. At serine 4023 the chain carries Phosphoserine. Positions arginine 4260–glutamate 4283 are disordered. Over residues valine 4261 to glutamate 4283 the composition is skewed to polar residues. The UBC core domain occupies alanine 4573 to methionine 4740. The Glycyl thioester intermediate role is filled by cysteine 4666. The disordered stretch occupies residues glutamate 4835 to leucine 4857. Residues lysine 4844 to leucine 4857 show a composition bias toward polar residues.

It belongs to the BIRC6 family. In terms of assembly, homodimer; antiparallel. Interacts with RNF41. Interacts with DIABLO/SMAC, likely with higher affinity to SMAC dimer than SMAC monomer; this interaction blocks the substrate-binding site and inhibits the caspase inhibition activity of BIRC6. Interacts with KIF23/MKLP1, USP8/UBPY, BIRC5/survivin, MAP2K1/MEK1, RAB8A/RAB8, RAB11A/RAB11, PLK1, EXOC3/SEC6 and EXOC4/SEC8. Post-translationally, ubiquitinated; mediated by RNF41 E3 ligase and leads to proteasomal degradation, impairing inhibition of apoptosis. Deubiquitinated by USP8/UBPY. Autoubiquitinated; mediated by E1 ubiquitin activating enzyme UBA6. Proteolytically cleaved. Acts as substrate for CASP3, CASP6, CASP7, CASP9 and HTRA2. In terms of tissue distribution, expressed in brain cancer cells.

It localises to the golgi apparatus. It is found in the trans-Golgi network membrane. Its subcellular location is the endosome. The protein resides in the cytoplasm. The protein localises to the cytoskeleton. It localises to the spindle pole. It is found in the microtubule organizing center. Its subcellular location is the centrosome. The protein resides in the midbody. The protein localises to the midbody ring. It carries out the reaction S-ubiquitinyl-[E1 ubiquitin-activating enzyme]-L-cysteine + [acceptor protein]-L-lysine = [E1 ubiquitin-activating enzyme]-L-cysteine + N(6)-monoubiquitinyl-[acceptor protein]-L-lysine.. Inhibited by DIABLO/SMAC, which competes for the substrate-binding sites on BIRC6. BIRC6 inhibits caspases and protease by ubiquitination but BIRC6 itself is subjected to protease cleavage by CASP3, CASP6, CASP7, CASP9 and HTRA2 by protease cleavage. Anti-apoptotic protein known as inhibitor of apoptosis (IAP) which can regulate cell death by controlling caspases and by acting as an E3 ubiquitin-protein ligase. Unlike most IAPs, does not contain a RING domain and it is not a RING-type E3 ligase. Instead acts as a dual E2/E3 enzyme that combines ubiquitin conjugating (E2) and ubiquitin ligase (E3) activities in a single polypeptide. Ubiquitination is mediated by a non-canonical E1 ubiquitin activating enzyme UBA6. Ubiquitinates CASP3, CASP7 and CASP9 and inhibits their caspase activity; also ubiquitinates their procaspases but to a weaker extent. Ubiquitinates pro-apoptotic factors DIABLO/SMAC and HTRA2. DIABLO/SMAC antagonizes the caspase inhibition activity of BIRC6 by competing for the same binding sites as the caspases. Ubiquitinates the autophagy protein MAP1LC3B; this activity is also inhibited by DIABLO/SMAC. Important regulator for the final stages of cytokinesis. Crucial for normal vesicle targeting to the site of abscission, but also for the integrity of the midbody and the midbody ring, and its striking ubiquitin modification. The sequence is that of Dual E2 ubiquitin-conjugating enzyme/E3 ubiquitin-protein ligase BIRC6 (BIRC6) from Homo sapiens (Human).